The sequence spans 40 residues: Dolichyl-diphosphooligosaccharide--protein glycosyltransferase subunit 4 (40 aa).

Residues 1–4 lie on the Lumenal side of the membrane; that stretch reads MITD. Residues 5-25 form a helical membrane-spanning segment; that stretch reads VQLAIFSNVLGVFLFLLVVAY. The Cytoplasmic segment spans residues 26-40; it reads HYINANTGKIGPKAK.

It belongs to the OST4 family. In terms of assembly, component of the oligosaccharyltransferase (OST) complex.

The protein resides in the endoplasmic reticulum membrane. Functionally, subunit of the oligosaccharyl transferase (OST) complex that catalyzes the initial transfer of a defined glycan (Glc(3)Man(9)GlcNAc(2) in eukaryotes) from the lipid carrier dolichol-pyrophosphate to an asparagine residue within an Asn-X-Ser/Thr consensus motif in nascent polypeptide chains, the first step in protein N-glycosylation. N-glycosylation occurs cotranslationally and the complex associates with the Sec61 complex at the channel-forming translocon complex that mediates protein translocation across the endoplasmic reticulum (ER). All subunits are required for a maximal enzyme activity. The sequence is that of Dolichyl-diphosphooligosaccharide--protein glycosyltransferase subunit 4 from Drosophila willistoni (Fruit fly).